Consider the following 689-residue polypeptide: Beta-galactosidase BbgII (689 aa).

2 residues coordinate substrate: Arg122 and Asn160. Catalysis depends on Glu161, which acts as the Proton donor. Catalysis depends on Glu320, which acts as the Nucleophile. Substrate contacts are provided by residues Trp328 and Glu368 to His371.

The protein belongs to the glycosyl hydrolase 42 family.

It catalyses the reaction Hydrolysis of terminal non-reducing beta-D-galactose residues in beta-D-galactosides.. The chain is Beta-galactosidase BbgII from Bifidobacterium bifidum (strain DSM 20082 / JCM 1254 / BCRC 11844 / KCTC 3440 / E319f (Variant a)).